A 630-amino-acid polypeptide reads, in one-letter code: Chaperone protein HtpG (630 aa).

The segment at 1–343 is a; substrate-binding; sequence MAKHQFQTEA…SKDLPLNVSR (343 aa). Positions 344 to 554 are b; that stretch reads EILQSNAVMA…KEDPAFMMAQ (211 aa). The interval 555–630 is c; sequence IMKQMGQSGD…RLNRVIAKAI (76 aa).

It belongs to the heat shock protein 90 family. Homodimer.

It is found in the cytoplasm. Its function is as follows. Molecular chaperone. Has ATPase activity. The sequence is that of Chaperone protein HtpG from Sulfurimonas denitrificans (strain ATCC 33889 / DSM 1251) (Thiomicrospira denitrificans (strain ATCC 33889 / DSM 1251)).